The chain runs to 638 residues: Growth hormone receptor (638 aa).

The signal sequence occupies residues 1 to 18 (MDLWRVFLTLALAVSSDM). Residues 19-265 (FPGSGATPAT…TLAACEEDFR (247 aa)) are Extracellular-facing. 2 disulfide bridges follow: cysteine 56/cysteine 66 and cysteine 101/cysteine 112. An N-linked (GlcNAc...) asparagine glycan is attached at asparagine 115. An intrachain disulfide couples cysteine 126 to cysteine 140. Residues 151–254 (PPIGLNWTLL…EVLRVTFPQM (104 aa)) enclose the Fibronectin type-III domain. N-linked (GlcNAc...) asparagine glycosylation is found at asparagine 156, asparagine 161, and asparagine 200. The WSXWS motif signature appears at 240–244 (YSEFS). The chain crosses the membrane as a helical span at residues 266–289 (FPWFLIIIFGIFGVAVMLFVVIFS). Over 290–638 (KQQRIKMLIL…STDQLNKIMQ (349 aa)) the chain is Cytoplasmic. The interval 295-380 (KMLILPPVPV…QEKSAGILGA (86 aa)) is required for JAK2 binding. The Box 1 motif signature appears at 298–306 (ILPPVPVPK). The short motif at 341–350 (DSWVEFIELD) is the UbE motif element. Residue serine 342 is modified to Phosphoserine. The interval 357-389 (KTEESDTDRLLSDDQEKSAGILGAKDDDSGRTS) is disordered. Residues 363-373 (TDRLLSDDQEK) show a composition bias toward basic and acidic residues. Phosphotyrosine occurs at positions 487 and 594.

This sequence belongs to the type I cytokine receptor family. Type 1 subfamily. On growth hormone (GH) binding, forms homodimers and binds JAK2 via a box 1-containing domain. The soluble form (GHBP) is produced by phorbol ester-promoted proteolytic cleavage at the cell surface (shedding) by ADAM17/TACE. Shedding is inhibited by growth hormone (GH) binding to the receptor probably due to a conformational change in GHR rendering the receptor inaccessible to ADAM17. In terms of processing, on GH binding, phosphorylated on tyrosine residues in the cytoplasmic domain by JAK2. Phosphorylation on either (or all of) Tyr-534, Tyr-566 and/or Tyr-627 is required for STAT5 activation. Phosphorylation on Tyr-333 would seem necessary for JAK2 activation. Post-translationally, ubiquitinated by the ECS(SOCS2) complex following ligand-binding and phosphorylation by JAK2, leading to its degradation by the proteasome. Regulation by the ECS(SOCS2) complex acts as a negative feedback loop of growth hormone receptor signaling. Ubiquitination is not sufficient for GHR internalization. As to expression, highest expression in liver. Also expressed in heart, kidney and muscle.

It is found in the cell membrane. The protein localises to the secreted. Receptor for pituitary gland growth hormone involved in regulating postnatal body growth. On ligand binding, couples to, and activates the JAK2/STAT5 pathway. Functionally, receptor for pituitary gland growth hormone (GH1) involved in regulating postnatal body growth. On ligand binding, couples to the JAK2/STAT5 pathway. Its function is as follows. The soluble form (GHBP) acts as a reservoir of growth hormone in plasma and may be a modulator/inhibitor of GH signaling. This Rattus norvegicus (Rat) protein is Growth hormone receptor (Ghr).